The chain runs to 250 residues: tRNA (guanine-N(1)-)-methyltransferase (250 aa).

Residues Gly116 and 136–141 (IGDYVL) contribute to the S-adenosyl-L-methionine site.

Belongs to the RNA methyltransferase TrmD family. In terms of assembly, homodimer.

It localises to the cytoplasm. It carries out the reaction guanosine(37) in tRNA + S-adenosyl-L-methionine = N(1)-methylguanosine(37) in tRNA + S-adenosyl-L-homocysteine + H(+). Specifically methylates guanosine-37 in various tRNAs. This is tRNA (guanine-N(1)-)-methyltransferase from Pseudomonas entomophila (strain L48).